Consider the following 414-residue polypeptide: Serine--tRNA ligase (414 aa).

230 to 232 (TAE) lines the L-serine pocket. 261 to 263 (RKE) serves as a coordination point for ATP. Position 284 (glutamate 284) interacts with L-serine. 348-351 (EISS) is an ATP binding site. An L-serine-binding site is contributed by serine 382.

The protein belongs to the class-II aminoacyl-tRNA synthetase family. Type-1 seryl-tRNA synthetase subfamily. Homodimer. The tRNA molecule binds across the dimer.

The protein localises to the cytoplasm. It catalyses the reaction tRNA(Ser) + L-serine + ATP = L-seryl-tRNA(Ser) + AMP + diphosphate + H(+). The catalysed reaction is tRNA(Sec) + L-serine + ATP = L-seryl-tRNA(Sec) + AMP + diphosphate + H(+). It functions in the pathway aminoacyl-tRNA biosynthesis; selenocysteinyl-tRNA(Sec) biosynthesis; L-seryl-tRNA(Sec) from L-serine and tRNA(Sec): step 1/1. Catalyzes the attachment of serine to tRNA(Ser). Is also able to aminoacylate tRNA(Sec) with serine, to form the misacylated tRNA L-seryl-tRNA(Sec), which will be further converted into selenocysteinyl-tRNA(Sec). In Nitratiruptor sp. (strain SB155-2), this protein is Serine--tRNA ligase.